A 298-amino-acid polypeptide reads, in one-letter code: Proton-activated chloride channel (298 aa).

Residues 1–12 are Cytoplasmic-facing; that stretch reads MPIGFNKACLKN. A helical transmembrane segment spans residues 13–33; that stretch reads VFTVILVLIYLALTAVAVFLA. Topologically, residues 34–245 are extracellular; it reads YQTISDFMDK…RDPFIQQVKD (212 aa). A helical transmembrane segment spans residues 246-266; it reads IVTANPWNTIAILCGVFMALF. Topologically, residues 267-298 are cytoplasmic; that stretch reads KAADFAKLSIKWMIRIRKRHIRAKMREMNQIS.

Belongs to the proton-activated chloride channel family.

Its subcellular location is the cell membrane. It catalyses the reaction chloride(in) = chloride(out). Chloride channel gated by pH that facilitates the entry of chloride ions into cells upon exposure to extracellular acidic pH. Displays channel activity with distinct kinetic properties compared to the human ortholog channel. The polypeptide is Proton-activated chloride channel (Danio rerio (Zebrafish)).